We begin with the raw amino-acid sequence, 150 residues long: Clitocypin (150 aa).

This sequence belongs to the protease inhibitor I48 family. In terms of assembly, homodimer. Uniformly expressed throughout the mature fruiting body (at mRNA and protein level).

Its function is as follows. Binds and inhibits cysteine proteinases. Inhibits most strongly papain and cathepsin L, more weakly bromelain and cathepsin B while it is completely ineffective against cathepsin H. In Clitocybe nebularis (Clouded agaric), this protein is Clitocypin (Cnc1).